A 160-amino-acid chain; its full sequence is 6,7-dimethyl-8-ribityllumazine synthase (160 aa).

5-amino-6-(D-ribitylamino)uracil is bound by residues phenylalanine 22, threonine 57–glutamate 59, and threonine 81–isoleucine 83. Residue glutamine 86–threonine 87 participates in (2S)-2-hydroxy-3-oxobutyl phosphate binding. Catalysis depends on histidine 89, which acts as the Proton donor. Leucine 114 serves as a coordination point for 5-amino-6-(D-ribitylamino)uracil. Arginine 128 serves as a coordination point for (2S)-2-hydroxy-3-oxobutyl phosphate.

This sequence belongs to the DMRL synthase family. Forms an icosahedral capsid composed of 60 subunits, arranged as a dodecamer of pentamers.

The catalysed reaction is (2S)-2-hydroxy-3-oxobutyl phosphate + 5-amino-6-(D-ribitylamino)uracil = 6,7-dimethyl-8-(1-D-ribityl)lumazine + phosphate + 2 H2O + H(+). Its pathway is cofactor biosynthesis; riboflavin biosynthesis; riboflavin from 2-hydroxy-3-oxobutyl phosphate and 5-amino-6-(D-ribitylamino)uracil: step 1/2. In terms of biological role, catalyzes the formation of 6,7-dimethyl-8-ribityllumazine by condensation of 5-amino-6-(D-ribitylamino)uracil with 3,4-dihydroxy-2-butanone 4-phosphate. This is the penultimate step in the biosynthesis of riboflavin. This is 6,7-dimethyl-8-ribityllumazine synthase from Buchnera aphidicola subsp. Acyrthosiphon pisum (strain APS) (Acyrthosiphon pisum symbiotic bacterium).